The chain runs to 334 residues: Porphobilinogen deaminase (334 aa).

Cys250 is subject to S-(dipyrrolylmethanemethyl)cysteine.

Belongs to the HMBS family. As to quaternary structure, monomer. It depends on dipyrromethane as a cofactor.

The catalysed reaction is 4 porphobilinogen + H2O = hydroxymethylbilane + 4 NH4(+). It participates in porphyrin-containing compound metabolism; protoporphyrin-IX biosynthesis; coproporphyrinogen-III from 5-aminolevulinate: step 2/4. Functionally, tetrapolymerization of the monopyrrole PBG into the hydroxymethylbilane pre-uroporphyrinogen in several discrete steps. The protein is Porphobilinogen deaminase of Cutibacterium acnes (strain DSM 16379 / KPA171202) (Propionibacterium acnes).